Reading from the N-terminus, the 280-residue chain is Nitrogenase iron protein (280 aa).

8–15 (GKGGIGKS) contacts ATP. Cys95 provides a ligand contact to [4Fe-4S] cluster. ADP-ribosylarginine; by dinitrogenase reductase ADP-ribosyltransferase is present on Arg98. A [4Fe-4S] cluster-binding site is contributed by Cys128.

The protein belongs to the NifH/BchL/ChlL family. Homodimer. It depends on [4Fe-4S] cluster as a cofactor. The reversible ADP-ribosylation of Arg-98 inactivates the nitrogenase reductase and regulates nitrogenase activity.

It catalyses the reaction N2 + 8 reduced [2Fe-2S]-[ferredoxin] + 16 ATP + 16 H2O = H2 + 8 oxidized [2Fe-2S]-[ferredoxin] + 2 NH4(+) + 16 ADP + 16 phosphate + 6 H(+). Its function is as follows. The key enzymatic reactions in nitrogen fixation are catalyzed by the nitrogenase complex, which has 2 components: the iron protein and the molybdenum-iron protein. The polypeptide is Nitrogenase iron protein (Methanospirillum hungatei JF-1 (strain ATCC 27890 / DSM 864 / NBRC 100397 / JF-1)).